Consider the following 288-residue polypeptide: uncharacterized protein (288 aa).

This is an uncharacterized protein from Methanocaldococcus jannaschii (strain ATCC 43067 / DSM 2661 / JAL-1 / JCM 10045 / NBRC 100440) (Methanococcus jannaschii).